Here is a 793-residue protein sequence, read N- to C-terminus: RNA-binding protein spenito (793 aa).

2 disordered regions span residues 1 to 93 (MSSH…PPAE) and 243 to 296 (HHDY…KKDK). Positions 25–42 (SRSPGPASRSSLSRNSRS) are enriched in low complexity. A compositionally biased stretch (basic residues) spans 257–268 (RGGHPHHLHGHA). Over residues 285–296 (APYEKPESKKDK) the composition is skewed to basic and acidic residues. RRM domains lie at 314-391 (RTLF…YGKV) and 395-469 (TRMW…FAEL). Positions 507–623 (YAPRGGYSPY…RNDALASAST (117 aa)) are disordered. A compositionally biased stretch (basic residues) spans 526-536 (GGYRGRGRGMY). The segment covering 566 to 593 (DEWRRPPGESYDRGARSSSREPGVERSR) has biased composition (basic and acidic residues). Residues 624 to 791 (VPDVARKCST…HLVIVVVRGG (168 aa)) enclose the SPOC domain.

This sequence belongs to the RRM Spen family. In terms of assembly, component of the WMM complex, a N6-methyltransferase complex composed of a catalytic subcomplex, named MAC, and of an associated subcomplex, named MACOM. The MAC subcomplex is composed of Ime4/Mettl3 and Mettl14. The MACOM subcomplex is composed of fl(2)d, Flacc/Xio, Hakai, vir, and, in some cases of nito. Interacts with Sxl. Interacts with Hipk; leading to phosphorylation. Post-translationally, phosphorylated by Hipk at Ser-23, Ser-25 and/or Ser-27; the precise position if phosphorylation sites is unknown. As to expression, widely expressed. Shows some enrichment in the central nervous system.

Its subcellular location is the nucleus. Its function is as follows. RNA-binding protein that acts as an associated component of the WMM complex, a complex that mediates N6-methyladenosine (m6A) methylation of mRNAs. M6a modification plays a role in the efficiency of mRNA splicing and is required for sex determination. In the WMM complex, may act by binding target RNAs and recruiting the WMM complex. Required for sex determination and dosage compensation via Sxl alternative splicing: m6A methylation acts as a key regulator of Sxl pre-mRNA and promotes female-specific alternative splicing of Sxl, which determines female physiognomy. M6A methylation is also required for neuronal functions. Acts as a positive regulator of canonical Wg signaling during wing disk and eye development. This Drosophila melanogaster (Fruit fly) protein is RNA-binding protein spenito.